Here is a 217-residue protein sequence, read N- to C-terminus: MPLHRLHGLYAITDPALTPDEHLLPAAEAALRGGAKLLQYRDKTASPTQREYRAAQLRQLCHQYHALFIVNDDPALAAQVNADGVHIGQSDGGIKAARDQLGGSRIIGVTCHGDLTLAARAAEAGADYLAMGRFFTSHTKPLAPPASLALLRQACQQFHQPVVAIGGVNPDNAPQLINAGAVSVAVIHALFGQTDTDAIEAAARQLSACFQTNRSAP.

4-amino-2-methyl-5-(diphosphooxymethyl)pyrimidine is bound by residues 39 to 43 (QYRDK) and Asn71. The Mg(2+) site is built by Asp72 and Asp91. Position 110 (Thr110) interacts with 4-amino-2-methyl-5-(diphosphooxymethyl)pyrimidine. A 2-[(2R,5Z)-2-carboxy-4-methylthiazol-5(2H)-ylidene]ethyl phosphate-binding site is contributed by 137-139 (SHT). Lys140 serves as a coordination point for 4-amino-2-methyl-5-(diphosphooxymethyl)pyrimidine. Residue Gly167 coordinates 2-[(2R,5Z)-2-carboxy-4-methylthiazol-5(2H)-ylidene]ethyl phosphate.

The protein belongs to the thiamine-phosphate synthase family. It depends on Mg(2+) as a cofactor.

The catalysed reaction is 2-[(2R,5Z)-2-carboxy-4-methylthiazol-5(2H)-ylidene]ethyl phosphate + 4-amino-2-methyl-5-(diphosphooxymethyl)pyrimidine + 2 H(+) = thiamine phosphate + CO2 + diphosphate. The enzyme catalyses 2-(2-carboxy-4-methylthiazol-5-yl)ethyl phosphate + 4-amino-2-methyl-5-(diphosphooxymethyl)pyrimidine + 2 H(+) = thiamine phosphate + CO2 + diphosphate. It catalyses the reaction 4-methyl-5-(2-phosphooxyethyl)-thiazole + 4-amino-2-methyl-5-(diphosphooxymethyl)pyrimidine + H(+) = thiamine phosphate + diphosphate. It participates in cofactor biosynthesis; thiamine diphosphate biosynthesis; thiamine phosphate from 4-amino-2-methyl-5-diphosphomethylpyrimidine and 4-methyl-5-(2-phosphoethyl)-thiazole: step 1/1. Its function is as follows. Condenses 4-methyl-5-(beta-hydroxyethyl)thiazole monophosphate (THZ-P) and 2-methyl-4-amino-5-hydroxymethyl pyrimidine pyrophosphate (HMP-PP) to form thiamine monophosphate (TMP). This chain is Thiamine-phosphate synthase, found in Alcanivorax borkumensis (strain ATCC 700651 / DSM 11573 / NCIMB 13689 / SK2).